The chain runs to 325 residues: Beta-ketoacyl-[acyl-carrier-protein] synthase III (325 aa).

Active-site residues include cysteine 116 and histidine 252. The interval 253–257 (QANLR) is ACP-binding. Asparagine 282 is an active-site residue.

Belongs to the thiolase-like superfamily. FabH family. In terms of assembly, homodimer.

It is found in the cytoplasm. The catalysed reaction is butanoyl-CoA + malonyl-[ACP] + H(+) = 3-oxohexanoyl-[ACP] + CO2 + CoA. It catalyses the reaction hexanoyl-CoA + malonyl-[ACP] + H(+) = 3-oxooctanoyl-[ACP] + CO2 + CoA. The enzyme catalyses octanoyl-CoA + malonyl-[ACP] + H(+) = 3-oxodecanoyl-[ACP] + CO2 + CoA. It carries out the reaction decanoyl-CoA + malonyl-[ACP] + H(+) = 3-oxododecanoyl-[ACP] + CO2 + CoA. The catalysed reaction is 2-methylpropanoyl-CoA + malonyl-[ACP] + H(+) = 4-methyl-3-oxopentanoyl-[ACP] + CO2 + CoA. It catalyses the reaction 3-methylbutanoyl-CoA + malonyl-[ACP] + H(+) = 5-methyl-3-oxohexanoyl-[ACP] + CO2 + CoA. The enzyme catalyses malonyl-[ACP] + acetyl-CoA + H(+) = 3-oxobutanoyl-[ACP] + CO2 + CoA. It functions in the pathway lipid metabolism; fatty acid biosynthesis. In terms of biological role, catalyzes the condensation reaction of fatty acid synthesis by the addition to an acyl acceptor of two carbons from malonyl-ACP. Catalyzes the first condensation reaction which initiates fatty acid synthesis and may therefore play a role in governing the total rate of fatty acid production. Possesses both acetoacetyl-ACP synthase and acetyl transacylase activities. Can use a wide range of acyl-CoAs as the primer substrate in vitro, with a slight preference for short, medium-straight chain acyl-CoAs. Can also use branched-chain acyl-CoAs and acetyl-CoA. This Xanthomonas campestris pv. campestris (strain 8004) protein is Beta-ketoacyl-[acyl-carrier-protein] synthase III.